The following is a 99-amino-acid chain: Malonate decarboxylase acyl carrier protein (99 aa).

Ser25 is modified (O-(phosphoribosyl dephospho-coenzyme A)serine).

The protein belongs to the MdcC family. Covalently binds the prosthetic group of malonate decarboxylase.

The protein resides in the cytoplasm. Subunit of malonate decarboxylase, it is an acyl carrier protein to which acetyl and malonyl thioester residues are bound via a 2'-(5''-phosphoribosyl)-3'-dephospho-CoA prosthetic group and turn over during the catalytic mechanism. This is Malonate decarboxylase acyl carrier protein from Pseudomonas putida (Arthrobacter siderocapsulatus).